The chain runs to 1294 residues: RNA replication protein (1294 aa).

Residues 59-224 (NPFAVKVHSH…SHEFKQLEWL (166 aa)) enclose the Alphavirus-like MT domain. Positions 541–698 (LKKQSKDWLA…TYQPFCRYYL (158 aa)) constitute a (+)RNA virus helicase ATP-binding domain. ATP is bound at residue 570 to 577 (GAGGSGKS). Residues 699 to 832 (NITHRNKPDL…CVREERMNEI (134 aa)) enclose the (+)RNA virus helicase C-terminal domain. The RdRp catalytic domain occupies 1071–1178 (RTCFSNDFTA…DYVASVKPSF (108 aa)).

This sequence belongs to the potexvirus/carlavirus RNA replication protein family.

It carries out the reaction RNA(n) + a ribonucleoside 5'-triphosphate = RNA(n+1) + diphosphate. It catalyses the reaction ATP + H2O = ADP + phosphate + H(+). Its function is as follows. RNA replication. The central part of this protein possibly functions as an ATP-binding helicase. The polypeptide is RNA replication protein (Trifolium (WCMV)).